A 248-amino-acid polypeptide reads, in one-letter code: Myelin protein P0 (248 aa).

The first 29 residues, 1–29 (MAPGAPSSSPSPILAVLLFSSLVLSPAQA), serve as a signal peptide directing secretion. In terms of domain architecture, Ig-like V-type spans 30–143 (IVVYTDREVH…DIVGKTSQVT (114 aa)). The Extracellular portion of the chain corresponds to 30-153 (IVVYTDREVH…LYVFEKVPTR (124 aa)). An intrachain disulfide couples Cys50 to Cys127. Asn122 carries an N-linked (GlcNAc...) (complex) asparagine glycan. The helical transmembrane segment at 154-179 (YGVVLGAVIGGVLGVVLLLLLLFYVV) threads the bilayer. The Cytoplasmic segment spans residues 180–248 (RYCWLRRQAA…GLGESRKDKK (69 aa)). Position 210 is a phosphoserine; by PKC (Ser210). The disordered stretch occupies residues 224–248 (DHSRSTKAVSEKKAKGLGESRKDKK). A phosphoserine mark is found at Ser226 and Ser228. Ser233 and Ser243 each carry phosphoserine; by PKC.

This sequence belongs to the myelin P0 protein family. Homodimer and homotetramer. N-glycosylated; contains sulfate-substituted glycan. In terms of tissue distribution, found only in peripheral nervous system Schwann cells.

The protein localises to the cell membrane. It localises to the myelin membrane. Its function is as follows. Is an adhesion molecule necessary for normal myelination in the peripheral nervous system. It mediates adhesion between adjacent myelin wraps and ultimately drives myelin compaction. The polypeptide is Myelin protein P0 (MPZ) (Homo sapiens (Human)).